We begin with the raw amino-acid sequence, 328 residues long: Phenylalanine--tRNA ligase alpha subunit (328 aa).

Glu-245 contacts Mg(2+).

This sequence belongs to the class-II aminoacyl-tRNA synthetase family. Phe-tRNA synthetase alpha subunit type 1 subfamily. As to quaternary structure, tetramer of two alpha and two beta subunits. Mg(2+) is required as a cofactor.

The protein localises to the cytoplasm. The catalysed reaction is tRNA(Phe) + L-phenylalanine + ATP = L-phenylalanyl-tRNA(Phe) + AMP + diphosphate + H(+). The protein is Phenylalanine--tRNA ligase alpha subunit of Helicobacter pylori (strain G27).